The following is a 514-amino-acid chain: Protein phosphatase 1H (514 aa).

Ser7 carries the post-translational modification Phosphoserine. The 431-residue stretch at 77–507 folds into the PPM-type phosphatase domain; it reads ATGYAEVINA…DDISVYVIPL (431 aa). The interval 109–135 is disordered; sequence AVTSTPNRNSSKRRSSLPNGEGLQLKE. Thr113 is subject to Phosphothreonine. 2 positions are modified to phosphoserine: Ser124 and Ser211. Arg213 is subject to Omega-N-methylarginine. Position 221 is a phosphoserine (Ser221). Thr224 carries the post-translational modification Phosphothreonine. Ser422 carries the post-translational modification Phosphoserine.

This sequence belongs to the PP2C family.

It is found in the nucleus. It localises to the cytoplasm. It carries out the reaction O-phospho-L-seryl-[protein] + H2O = L-seryl-[protein] + phosphate. It catalyses the reaction O-phospho-L-threonyl-[protein] + H2O = L-threonyl-[protein] + phosphate. Its function is as follows. Dephosphorylates CDKN1B at 'Thr-187', thus removing a signal for proteasomal degradation. This is Protein phosphatase 1H (PPM1H) from Homo sapiens (Human).